The sequence spans 466 residues: Asparagine--tRNA ligase (466 aa).

The protein belongs to the class-II aminoacyl-tRNA synthetase family. Homodimer.

The protein localises to the cytoplasm. The catalysed reaction is tRNA(Asn) + L-asparagine + ATP = L-asparaginyl-tRNA(Asn) + AMP + diphosphate + H(+). The polypeptide is Asparagine--tRNA ligase (Shigella dysenteriae serotype 1 (strain Sd197)).